Reading from the N-terminus, the 416-residue chain is Serine/threonine transporter SstT (416 aa).

9 helical membrane passes run 15–35 (SLVS…MFMP), 49–69 (VGAL…AAII), 82–102 (ILLL…VASF), 141–161 (ALMD…GIAM), 192–212 (LGIL…ALFG), 217–237 (LVVL…IIVF), 288–308 (VSIP…ITVL), 330–350 (VVAT…LLLI), and 356–376 (LFGI…IIGV).

This sequence belongs to the dicarboxylate/amino acid:cation symporter (DAACS) (TC 2.A.23) family.

It localises to the cell inner membrane. The enzyme catalyses L-serine(in) + Na(+)(in) = L-serine(out) + Na(+)(out). The catalysed reaction is L-threonine(in) + Na(+)(in) = L-threonine(out) + Na(+)(out). Functionally, involved in the import of serine and threonine into the cell, with the concomitant import of sodium (symport system). This is Serine/threonine transporter SstT from Aeromonas salmonicida (strain A449).